Reading from the N-terminus, the 61-residue chain is Small ribosomal subunit protein uS14 (61 aa).

The Zn(2+) site is built by Cys24, Cys27, Cys40, and Cys43.

The protein belongs to the universal ribosomal protein uS14 family. Zinc-binding uS14 subfamily. In terms of assembly, part of the 30S ribosomal subunit. Contacts proteins S3 and S10. Requires Zn(2+) as cofactor.

In terms of biological role, binds 16S rRNA, required for the assembly of 30S particles and may also be responsible for determining the conformation of the 16S rRNA at the A site. This chain is Small ribosomal subunit protein uS14, found in Syntrophotalea carbinolica (strain DSM 2380 / NBRC 103641 / GraBd1) (Pelobacter carbinolicus).